The following is a 449-amino-acid chain: Methionine aminopeptidase 2 (449 aa).

Residues 1-91 (MAAQAAPELA…PRIPLTTLFP (91 aa)) are disordered. The span at 34–50 (EEAENEGDSEDDRDDEQ) shows a compositional bias: acidic residues. A compositionally biased stretch (basic residues) spans 61–75 (KKKKKKRPKKKKKTA). H199 serves as a coordination point for substrate. A divalent metal cation-binding residues include D219, D230, and H299. Residue H307 participates in substrate binding. A divalent metal cation is bound by residues E335 and E430.

The protein belongs to the peptidase M24A family. Methionine aminopeptidase eukaryotic type 2 subfamily. Requires Co(2+) as cofactor. The cofactor is Zn(2+). It depends on Mn(2+) as a cofactor. Fe(2+) serves as cofactor.

Its subcellular location is the cytoplasm. It catalyses the reaction Release of N-terminal amino acids, preferentially methionine, from peptides and arylamides.. Cotranslationally removes the N-terminal methionine from nascent proteins. The N-terminal methionine is often cleaved when the second residue in the primary sequence is small and uncharged (Met-Ala-, Cys, Gly, Pro, Ser, Thr, or Val). This chain is Methionine aminopeptidase 2, found in Trichophyton verrucosum (strain HKI 0517).